We begin with the raw amino-acid sequence, 309 residues long: Elongator complex protein 5 (309 aa).

A phosphoserine mark is found at S3 and S4.

The protein belongs to the ELP5 family. As to quaternary structure, component of the elongator complex, which consists of ELP1/IKI3, ELP2, ELP3, ELP4, ELP5/IKI1 and ELP6. The elongator complex is composed of two copies of the Elp123 subcomplex (composed of ELP1/IKI3, ELP2 and ELP3) and two copies of the Elp456 subcomplex (composed of ELP4, ELP5/IKI1 and ELP6). The Elp123 subcomplex forms a two-lobed scaffold, which binds the Elp456 subcomplex asymmetrically. In each lobe, ELP2 is tightly sandwiched between ELP1/IKI3 and ELP3. The Elp123 subcomplex binds tRNA through ELP1/IKI3 and ELP3 and can bind 2 tRNAs simultaneously. tRNA-binding by the Elp123 subcomplex induces conformational rearrangements which precisely position the targeted anticodon base in the active site. The Elp456 subcomplex binds tRNA and has ATPase activity. Interacts with KTI11/DPH3.

The protein localises to the cytoplasm. It localises to the nucleus. It functions in the pathway tRNA modification; 5-methoxycarbonylmethyl-2-thiouridine-tRNA biosynthesis. Its function is as follows. Component of the elongator complex which is required for multiple tRNA modifications, including mcm5U (5-methoxycarbonylmethyl uridine), mcm5s2U (5-methoxycarbonylmethyl-2-thiouridine), and ncm5U (5-carbamoylmethyl uridine). The elongator complex catalyzes formation of carboxymethyluridine in the wobble base at position 34 in tRNAs. It functions as a gamma-toxin target (TOT); disruption of the complex confers resistance to Kluyveromyces lactis toxin zymocin (pGKL1 killer toxin). May also be involved in sensitivity to Pichia inositovora toxin. The chain is Elongator complex protein 5 (IKI1) from Saccharomyces cerevisiae (strain ATCC 204508 / S288c) (Baker's yeast).